A 278-amino-acid chain; its full sequence is Large ribosomal subunit protein uL2 (278 aa).

Positions 212–221 (NRWLGKRPHN) are enriched in basic residues. The interval 212–278 (NRWLGKRPHN…ILSSRHNRKK (67 aa)) is disordered.

The protein belongs to the universal ribosomal protein uL2 family. As to quaternary structure, part of the 50S ribosomal subunit. Forms a bridge to the 30S subunit in the 70S ribosome.

In terms of biological role, one of the primary rRNA binding proteins. Required for association of the 30S and 50S subunits to form the 70S ribosome, for tRNA binding and peptide bond formation. It has been suggested to have peptidyltransferase activity; this is somewhat controversial. Makes several contacts with the 16S rRNA in the 70S ribosome. This chain is Large ribosomal subunit protein uL2, found in Methylorubrum populi (strain ATCC BAA-705 / NCIMB 13946 / BJ001) (Methylobacterium populi).